A 583-amino-acid chain; its full sequence is Pescadillo (583 aa).

Residues 275–329 adopt a coiled-coil conformation; it reads EKLSALSASLARMVASVEEEEAELDHFPTEGEDQEKMEVREKMEQQQSKQKKLFE. A BRCT domain is found at 323–416; the sequence is KQKKLFEGLK…IQLPVEEYFL (94 aa). Disordered regions lie at residues 448–526 and 558–583; these read RGEK…EEKA and ANKLAAKRKAHDDASKADKKKKKKKC. Acidic residues predominate over residues 455 to 489; sequence EEDEEEEGEEEEDDEEDEEDDEQSEDEEEAEEEAN. Residues 512 to 526 are compositionally biased toward basic and acidic residues; it reads AKAENRARAAEEEKA.

The protein belongs to the pescadillo family. Component of the PeBoW complex, composed of bop1, pes1 and wdr12. The complex is held together by bop1, which interacts with pes1 via its N-terminal domain and with wdr12 via a high-affinity interaction between the seven-bladed beta-propeller domains of the 2 proteins. The PeBoW complex associates with the 66S pre-ribosome.

It localises to the nucleus. Its subcellular location is the nucleolus. The protein localises to the nucleoplasm. Its function is as follows. Component of the PeBoW complex, which is required for maturation of 28S and 5.8S ribosomal RNAs and formation of the 60S ribosome. In Danio rerio (Zebrafish), this protein is Pescadillo (pes).